The sequence spans 448 residues: Homogentisate 1,2-dioxygenase (448 aa).

His340, Glu346, and His377 together coordinate Fe cation.

The protein belongs to the homogentisate dioxygenase family. The cofactor is Fe cation.

It carries out the reaction homogentisate + O2 = 4-maleylacetoacetate + H(+). It functions in the pathway amino-acid degradation; L-phenylalanine degradation; acetoacetate and fumarate from L-phenylalanine: step 4/6. This is Homogentisate 1,2-dioxygenase (hmgA) from Emericella nidulans (strain FGSC A4 / ATCC 38163 / CBS 112.46 / NRRL 194 / M139) (Aspergillus nidulans).